A 347-amino-acid chain; its full sequence is MQIKEHASLKAFHTFGIEQTCSYLAIVDSIDDVISLYQNPAFQSLPKLFLGKGSNVLFTEHFDGLVIVNRLLGKSVSETHEDYLLHVQGGEDWPSLVAWCVAQGMGGIENLALIPGCAGSAPIQNIGAYGVELKDLCSYVDVLDLTTLKTRRMSAEDCEFGYRDSVFKHDLYEKCFVTAIGLKLPKRWTPKNQYGPLQNIPENELSPNAIFERVCQVRMEKLPDPAKVGNAGSFFKNPVISQDHYDQLVRKHSDMVAYPANEGMKVAAGWLIDQCGLKGISVNGAQVNPLQALVLTNVDNCSADDVVALASLVKRAVWDKYQIELEHEVRFMNRQGETNLAKIEAAQ.

Residues 15 to 187 enclose the FAD-binding PCMH-type domain; sequence FGIEQTCSYL…TAIGLKLPKR (173 aa). R163 is a catalytic residue. S233 functions as the Proton donor in the catalytic mechanism. Residue E328 is part of the active site.

Belongs to the MurB family. The cofactor is FAD.

It is found in the cytoplasm. The catalysed reaction is UDP-N-acetyl-alpha-D-muramate + NADP(+) = UDP-N-acetyl-3-O-(1-carboxyvinyl)-alpha-D-glucosamine + NADPH + H(+). The protein operates within cell wall biogenesis; peptidoglycan biosynthesis. Functionally, cell wall formation. The sequence is that of UDP-N-acetylenolpyruvoylglucosamine reductase from Vibrio parahaemolyticus serotype O3:K6 (strain RIMD 2210633).